The primary structure comprises 217 residues: Ribosomal RNA small subunit methyltransferase G (217 aa).

S-adenosyl-L-methionine contacts are provided by residues glycine 79, leucine 84, 130–131 (IE), and arginine 148.

Belongs to the methyltransferase superfamily. RNA methyltransferase RsmG family.

The protein localises to the cytoplasm. It carries out the reaction guanosine(527) in 16S rRNA + S-adenosyl-L-methionine = N(7)-methylguanosine(527) in 16S rRNA + S-adenosyl-L-homocysteine. Its function is as follows. Specifically methylates the N7 position of guanine in position 527 of 16S rRNA. The sequence is that of Ribosomal RNA small subunit methyltransferase G from Desulfotalea psychrophila (strain LSv54 / DSM 12343).